Here is a 182-residue protein sequence, read N- to C-terminus: Glycoprotein Q2 (182 aa).

A signal peptide spans 1–20 (MHFVAVYILTHFHAYPGVAA). 2 N-linked (GlcNAc...) asparagine; by host glycosylation sites follow: N74 and N110.

Interacts with isoform gQ2. The heterodimer gQ1-gQ2 associates with the glycoprotein complex gH-gL to form a tetrameric complex. The gH/gL/gQ1/gQ2 complex binds to host TNFRSF4. In terms of processing, glycosylated by host.

The protein resides in the virion membrane. It localises to the host endoplasmic reticulum-Golgi intermediate compartment. Its function is as follows. Plays a role in virus entry by participating in host receptor binding at the cell surface. This is Glycoprotein Q2 from Human herpesvirus 6B (strain Z29) (HHV-6 variant B).